Here is a 76-residue protein sequence, read N- to C-terminus: Tautomerase PptA (76 aa).

Residue Pro-2 is the Proton acceptor; via imino nitrogen of the active site.

Belongs to the 4-oxalocrotonate tautomerase family. PptA subfamily. As to quaternary structure, homodimer.

It is found in the cytoplasm. This Pectobacterium carotovorum subsp. carotovorum (strain PC1) protein is Tautomerase PptA.